A 570-amino-acid polypeptide reads, in one-letter code: Putative pyruvate decarboxylase C3G9.11c (570 aa).

Residues Asp30 and His119 each coordinate pyruvate. Thiamine diphosphate is bound by residues Thr396 and 419 to 421; that span reads GSI. Mg(2+) is bound at residue Asp451. Thiamine diphosphate is bound by residues 452-453 and 478-483; these read GS and NKGYTI. Mg(2+) contacts are provided by Asn478 and Gly480. Glu484 is a pyruvate binding site.

It belongs to the TPP enzyme family. In terms of assembly, homotetramer. The cofactor is Mg(2+). Thiamine diphosphate serves as cofactor.

The protein resides in the cytoplasm. The protein localises to the nucleus. It carries out the reaction a 2-oxocarboxylate + H(+) = an aldehyde + CO2. It catalyses the reaction pyruvate + H(+) = acetaldehyde + CO2. This is Putative pyruvate decarboxylase C3G9.11c from Schizosaccharomyces pombe (strain 972 / ATCC 24843) (Fission yeast).